A 344-amino-acid polypeptide reads, in one-letter code: MNGSSANPRAALSSAMTDPFGRTISYLRVSVTDRCDLRCFYCMSEDMTFLPKADLLTLEELDRLCSAFIAKGVKKLRLTGGEPLVRRNVMTLVRSLSRHLSSGALSELTLTTNGTQLAKYARELADCGVRRINVSLDTLDPKKFREITRWGEIDKVLEGIEAARAAGLAVKINAVALKNLNEDELPSLMRWAHGKNMGLTLIEVMPMGEIGAGRIDQYLPLSLVRARLAQQFTLMDLAESTGGPARYVSVAETGGKLGFITPMTHNFCESCNRVRITCTGTLHTCLGHEDASDLRKPLRASDDDMLLADAIDRAIGLKPKGHDFIIDRRHNRPSVSRHMSVTGG.

The 226-residue stretch at 19–244 (PFGRTISYLR…MDLAESTGGP (226 aa)) folds into the Radical SAM core domain. Arginine 28 provides a ligand contact to GTP. The [4Fe-4S] cluster site is built by cysteine 35 and cysteine 39. Tyrosine 41 lines the S-adenosyl-L-methionine pocket. Residue cysteine 42 participates in [4Fe-4S] cluster binding. Position 77 (arginine 77) interacts with GTP. Glycine 81 provides a ligand contact to S-adenosyl-L-methionine. Residue threonine 111 coordinates GTP. An S-adenosyl-L-methionine-binding site is contributed by serine 135. A GTP-binding site is contributed by lysine 171. An S-adenosyl-L-methionine-binding site is contributed by methionine 205. [4Fe-4S] cluster is bound by residues cysteine 268 and cysteine 271. A GTP-binding site is contributed by 273 to 275 (RVR). Cysteine 285 contributes to the [4Fe-4S] cluster binding site.

This sequence belongs to the radical SAM superfamily. MoaA family. As to quaternary structure, monomer and homodimer. The cofactor is [4Fe-4S] cluster.

It catalyses the reaction GTP + AH2 + S-adenosyl-L-methionine = (8S)-3',8-cyclo-7,8-dihydroguanosine 5'-triphosphate + 5'-deoxyadenosine + L-methionine + A + H(+). The protein operates within cofactor biosynthesis; molybdopterin biosynthesis. In terms of biological role, catalyzes the cyclization of GTP to (8S)-3',8-cyclo-7,8-dihydroguanosine 5'-triphosphate. This chain is GTP 3',8-cyclase, found in Bradyrhizobium diazoefficiens (strain JCM 10833 / BCRC 13528 / IAM 13628 / NBRC 14792 / USDA 110).